Here is a 308-residue protein sequence, read N- to C-terminus: Ribosomal RNA small subunit methyltransferase H (308 aa).

S-adenosyl-L-methionine-binding positions include 36 to 38, aspartate 55, phenylalanine 82, aspartate 103, and glutamine 110; that span reads GGH.

Belongs to the methyltransferase superfamily. RsmH family.

It is found in the cytoplasm. The enzyme catalyses cytidine(1402) in 16S rRNA + S-adenosyl-L-methionine = N(4)-methylcytidine(1402) in 16S rRNA + S-adenosyl-L-homocysteine + H(+). Functionally, specifically methylates the N4 position of cytidine in position 1402 (C1402) of 16S rRNA. The sequence is that of Ribosomal RNA small subunit methyltransferase H from Helicobacter pylori (strain J99 / ATCC 700824) (Campylobacter pylori J99).